Consider the following 158-residue polypeptide: 6,7-dimethyl-8-ribityllumazine synthase (158 aa).

5-amino-6-(D-ribitylamino)uracil is bound by residues Phe-22, 56-58, and 80-82; these read ALE and VVI. A (2S)-2-hydroxy-3-oxobutyl phosphate-binding site is contributed by 85 to 86; it reads ET. Residue His-88 is the Proton donor of the active site. Asn-113 serves as a coordination point for 5-amino-6-(D-ribitylamino)uracil. Arg-127 lines the (2S)-2-hydroxy-3-oxobutyl phosphate pocket.

The protein belongs to the DMRL synthase family.

It carries out the reaction (2S)-2-hydroxy-3-oxobutyl phosphate + 5-amino-6-(D-ribitylamino)uracil = 6,7-dimethyl-8-(1-D-ribityl)lumazine + phosphate + 2 H2O + H(+). It participates in cofactor biosynthesis; riboflavin biosynthesis; riboflavin from 2-hydroxy-3-oxobutyl phosphate and 5-amino-6-(D-ribitylamino)uracil: step 1/2. Its function is as follows. Catalyzes the formation of 6,7-dimethyl-8-ribityllumazine by condensation of 5-amino-6-(D-ribitylamino)uracil with 3,4-dihydroxy-2-butanone 4-phosphate. This is the penultimate step in the biosynthesis of riboflavin. This is 6,7-dimethyl-8-ribityllumazine synthase from Neisseria meningitidis serogroup C / serotype 2a (strain ATCC 700532 / DSM 15464 / FAM18).